The following is a 493-amino-acid chain: Probable cytosol aminopeptidase (493 aa).

Positions 260 and 265 each coordinate Mn(2+). Lys272 is a catalytic residue. 3 residues coordinate Mn(2+): Asp283, Asp342, and Glu344. Arg346 is an active-site residue.

This sequence belongs to the peptidase M17 family. It depends on Mn(2+) as a cofactor.

Its subcellular location is the cytoplasm. The catalysed reaction is Release of an N-terminal amino acid, Xaa-|-Yaa-, in which Xaa is preferably Leu, but may be other amino acids including Pro although not Arg or Lys, and Yaa may be Pro. Amino acid amides and methyl esters are also readily hydrolyzed, but rates on arylamides are exceedingly low.. It carries out the reaction Release of an N-terminal amino acid, preferentially leucine, but not glutamic or aspartic acids.. Presumably involved in the processing and regular turnover of intracellular proteins. Catalyzes the removal of unsubstituted N-terminal amino acids from various peptides. This is Probable cytosol aminopeptidase from Clostridium perfringens (strain 13 / Type A).